The primary structure comprises 236 residues: Rho-related GTP-binding protein RhoV (236 aa).

Residues 1 to 27 (MPPRELSEAEPPPLRAPTPPPRRRSAP) are disordered. A compositionally biased stretch (pro residues) spans 10–20 (EPPPLRAPTPP). S25 bears the Phosphoserine mark. GTP is bound by residues 38–45 (GDGAVGKS), 85–89 (DTAGQ), and 143–146 (TQAD). C234 is lipidated: S-palmitoyl cysteine.

This sequence belongs to the small GTPase superfamily. Rho family. As to quaternary structure, interacts with PAK2. It depends on Mg(2+) as a cofactor. In terms of tissue distribution, highly expressed in pancreas, placenta, and fetal brain.

It localises to the cell membrane. The protein localises to the endosome membrane. In terms of biological role, plays a role in the control of the actin cytoskeleton via activation of the JNK pathway. The polypeptide is Rho-related GTP-binding protein RhoV (Homo sapiens (Human)).